Consider the following 267-residue polypeptide: uncharacterized protein (267 aa).

Residues 72–267 (LTENNNNNNT…EEKKKKKKKK (196 aa)) form a disordered region. Residues 122–145 (DSVSSSTTTTIITNNKKINNNNNN) are compositionally biased toward low complexity. The span at 159–175 (ENEKSVQKSKKEKESPK) shows a compositional bias: basic and acidic residues. Residues 194–218 (SESSSSSSSSSSSESSSSESESSSS) show a composition bias toward low complexity.

This is an uncharacterized protein from Dictyostelium discoideum (Social amoeba).